The primary structure comprises 778 residues: Ribonucleoside-diphosphate reductase large subunit (778 aa).

Residues serine 177, 192 to 193 (SC), glycine 221, 419 to 423 (NLCIE), and 613 to 617 (PTATS) each bind substrate. Residues cysteine 193 and cysteine 439 are joined by a disulfide bond. The active-site Proton acceptor is the asparagine 419. Catalysis depends on cysteine 421, which acts as the Cysteine radical intermediate. The active-site Proton acceptor is glutamate 423.

Belongs to the ribonucleoside diphosphate reductase large chain family. As to quaternary structure, heterotetramer composed of a homodimer of the large subunit (R1) and a homodimer of the small subunit (R2). Larger multisubunit protein complex are also active, composed of (R1)n(R2)n.

The catalysed reaction is a 2'-deoxyribonucleoside 5'-diphosphate + [thioredoxin]-disulfide + H2O = a ribonucleoside 5'-diphosphate + [thioredoxin]-dithiol. Its activity is regulated as follows. Under complex allosteric control mediated by deoxynucleoside triphosphates and ATP binding. The type of nucleotide bound at the specificity site determines substrate preference. It seems probable that ATP makes the enzyme reduce CDP and UDP, dGTP favors ADP reduction and dTTP favors GDP reduction. In terms of biological role, ribonucleoside-diphosphate reductase holoenzyme provides the precursors necessary for viral DNA synthesis. Allows virus growth in non-dividing cells. Catalyzes the biosynthesis of deoxyribonucleotides from the corresponding ribonucleotides. This African swine fever virus (isolate Tick/South Africa/Pretoriuskop Pr4/1996) (ASFV) protein is Ribonucleoside-diphosphate reductase large subunit.